We begin with the raw amino-acid sequence, 763 residues long: DNA-binding protein SATB1 (763 aa).

Residues 1 to 15 (MDHLNEATQGKEHSE) show a composition bias toward basic and acidic residues. A disordered region spans residues 1-54 (MDHLNEATQGKEHSEMSNNVSDPKGPPAKIARLEQNGSPLGRGRLGSTGAKMQG). Positions 20–40 (VSDPKGPPAKIARLEQNGSPL) match the Nuclear localization signal motif. Lysine 51 participates in a covalent cross-link: Glycyl lysine isopeptide (Lys-Gly) (interchain with G-Cter in SUMO2). One can recognise a CMP domain in the interval 71 to 172 (GTMLPVFCVV…VVTLKIQLHS (102 aa)). Lysine 136 bears the N6-acetyllysine mark. The Protein interaction signature appears at 139-143 (PVPLS). The 74-residue stretch at 175-248 (KLEDLPPEQW…WYKHFKKTKD (74 aa)) folds into the CUTL domain. Residue serine 185 is modified to Phosphoserine. Residues 224 to 278 (YYANVSAAKCQEFGRWYKHFKKTKDMMVEMDSLSELSQQGANHVNFGQQPVPGNT) are nuclear matrix targeting sequence (NMTS). Polar residues predominate over residues 266 to 296 (HVNFGQQPVPGNTAEQPPSPAQLSHGSQPSV). Residues 266–307 (HVNFGQQPVPGNTAEQPPSPAQLSHGSQPSVRTPLPNLHPGL) form a disordered region. 2 consecutive DNA-binding regions (CUT) follow at residues 361-448 (LEQQ…QDER) and 484-571 (NGKP…EQES). DNA-binding positions include glutamine 390, 400–410 (RTQGLLSEILR), and asparagine 425. The segment covering 591–607 (QIQQQQQQQQQQQQQQQ) has biased composition (low complexity). The tract at residues 591–649 (QIQQQQQQQQQQQQQQQAPPPPQPQQQPQTGPRLPPRQPTVASPAESDEENRQKTRPRT) is disordered. Serine 637 carries the phosphoserine modification. The homeobox DNA-binding region spans 645 to 704 (TRPRTKISVEALGILQSFIQDVGLYPDEEAIQTLSAQLDLPKYTIIKFFQNQRYYLKHHG). Residue lysine 744 forms a Glycyl lysine isopeptide (Lys-Gly) (interchain with G-Cter in SUMO) linkage.

Belongs to the CUT homeobox family. As to quaternary structure, interacts with CUX1 (via DNA-binding domains); the interaction inhibits the attachment of both proteins to DNA. Homodimer. Part of the nuclear protein complex gamma-globin promoter and enhancer binding factor (gamma-PE) composed at least of SATB1 and HOXB2. Interaction with CtBP1 when not acetylated stabilizes attachment to DNA and promotes transcription repression. Interacts with PCAF. Interacts with sumoylated PML and HDAC1 via the CMP domain. Interacts also with DYNLT3 and POLR2J2. Binds to EP300. (Microbial infection) Interacts (via the CMP domain) with HIV-1 Tat. Sumoylated. Sumoylation promotes cleavage by caspases. In terms of processing, phosphorylated by PKC. Acetylated by PCAF. Phosphorylated form interacts with HDAC1, but unphosphorylated form interacts with PCAF. DNA binding properties are activated by phosphorylation and inactivated by acetylation. In opposition, gene expression is down-regulated by phosphorylation but up-regulated by acetylation. Post-translationally, cleaved at Asp-254 by caspase-3 and caspase-6 during T-cell apoptosis in thymus and during B-cell stimulation. The cleaved forms cannot dimerize and lose transcription regulation function because of impaired DNA and chromatin association. Expressed predominantly in thymus.

It is found in the nucleus matrix. It localises to the nucleus. Its subcellular location is the PML body. Functionally, crucial silencing factor contributing to the initiation of X inactivation mediated by Xist RNA that occurs during embryogenesis and in lymphoma. Binds to DNA at special AT-rich sequences, the consensus SATB1-binding sequence (CSBS), at nuclear matrix- or scaffold-associated regions. Thought to recognize the sugar-phosphate structure of double-stranded DNA. Transcriptional repressor controlling nuclear and viral gene expression in a phosphorylated and acetylated status-dependent manner, by binding to matrix attachment regions (MARs) of DNA and inducing a local chromatin-loop remodeling. Acts as a docking site for several chromatin remodeling enzymes (e.g. PML at the MHC-I locus) and also by recruiting corepressors (HDACs) or coactivators (HATs) directly to promoters and enhancers. Modulates genes that are essential in the maturation of the immune T-cell CD8SP from thymocytes. Required for the switching of fetal globin species, and beta- and gamma-globin genes regulation during erythroid differentiation. Plays a role in chromatin organization and nuclear architecture during apoptosis. Interacts with the unique region (UR) of cytomegalovirus (CMV). Alu-like motifs and SATB1-binding sites provide a unique chromatin context which seems preferentially targeted by the HIV-1 integration machinery. Moreover, HIV-1 Tat may overcome SATB1-mediated repression of IL2 and IL2RA (interleukin) in T-cells by binding to the same domain than HDAC1. Delineates specific epigenetic modifications at target gene loci, directly up-regulating metastasis-associated genes while down-regulating tumor-suppressor genes. Reprograms chromatin organization and the transcription profiles of breast tumors to promote growth and metastasis. Promotes neuronal differentiation of neural stem/progenitor cells in the adult subventricular zone, possibly by positively regulating the expression of NEUROD1. This chain is DNA-binding protein SATB1, found in Homo sapiens (Human).